Reading from the N-terminus, the 183-residue chain is Thioredoxin/glutathione peroxidase BtuE (183 aa).

Residue Cys37 is part of the active site.

The protein belongs to the glutathione peroxidase family. BtuE subfamily.

The protein localises to the periplasm. The catalysed reaction is 2 glutathione + H2O2 = glutathione disulfide + 2 H2O. It carries out the reaction a hydroperoxide + [thioredoxin]-dithiol = an alcohol + [thioredoxin]-disulfide + H2O. Non-specific peroxidase that can use thioredoxin or glutathione as a reducing agent. In vitro, utilizes preferentially thioredoxin A to decompose hydrogen peroxide as well as cumene-, tert-butyl-, and linoleic acid hydroperoxides, suggesting that it may have one or more organic hydroperoxide as its physiological substrate. This Escherichia coli (strain K12) protein is Thioredoxin/glutathione peroxidase BtuE.